The following is a 205-amino-acid chain: MAASTASQRPLKGILKDNTSTTSSMVASAEHPRGSVHEQLSKKSQKWDEMNILATYRPADKDYGLMKIDEPSTPYHSTMGDDEDACSDTETTEAMATDSLAKNLAAAEGLEPKYQVQEQESSGEEDSDLSPEEREKKRQFEMRRTLHYNEGLNIKLARQLISKDLHDDDKVEEMLETAHGESMNTEESNQGSTASDQQQNKSRSS.

4 disordered regions span residues 1–44, 64–92, 107–148, and 171–205; these read MAAS…SKKS, GLMKIDEPSTPYHSTMGDDEDACSDTETT, AEGL…TLHY, and VEEMLETAHGESMNTEESNQGSTASDQQQNKSRSS. Required for binding PPP1CC regions lie at residues 12-17 and 43-55; these read KGILKD and KSQKWDEMNILAT. Residues 17–26 show a composition bias toward polar residues; that stretch reads DNTSTTSSMV. A compositionally biased stretch (basic and acidic residues) spans 30–44; the sequence is EHPRGSVHEQLSKKS. Threonine 73 bears the Phosphothreonine; by GSK3 mark. Composition is skewed to acidic residues over residues 80-91 and 121-130; these read GDDEDACSDTET and SSGEEDSDLS. Position 87 is a phosphoserine; by CK2 (serine 87). Positions 131 to 144 are enriched in basic and acidic residues; sequence PEEREKKRQFEMRR. The segment at 147-150 is required for binding PPP1CC catalytic center, displacing metal ions and inhibition of PPP1CC catalytic activity; it reads HYNE. The segment covering 182-205 has biased composition (polar residues); it reads SMNTEESNQGSTASDQQQNKSRSS.

It belongs to the protein phosphatase inhibitor 2 family.

Its function is as follows. Inhibitor of protein-phosphatase 1. The sequence is that of Putative protein phosphatase inhibitor 2-like protein 1 (PPP1R2P1) from Homo sapiens (Human).